We begin with the raw amino-acid sequence, 199 residues long: Peptidyl-tRNA hydrolase (199 aa).

Y15 contributes to the tRNA binding site. H20 functions as the Proton acceptor in the catalytic mechanism. TRNA-binding residues include F66, N68, and N114.

The protein belongs to the PTH family. In terms of assembly, monomer.

It localises to the cytoplasm. It catalyses the reaction an N-acyl-L-alpha-aminoacyl-tRNA + H2O = an N-acyl-L-amino acid + a tRNA + H(+). Functionally, hydrolyzes ribosome-free peptidyl-tRNAs (with 1 or more amino acids incorporated), which drop off the ribosome during protein synthesis, or as a result of ribosome stalling. In terms of biological role, catalyzes the release of premature peptidyl moieties from peptidyl-tRNA molecules trapped in stalled 50S ribosomal subunits, and thus maintains levels of free tRNAs and 50S ribosomes. This is Peptidyl-tRNA hydrolase from Cupriavidus pinatubonensis (strain JMP 134 / LMG 1197) (Cupriavidus necator (strain JMP 134)).